A 446-amino-acid chain; its full sequence is Argininosuccinate synthase (446 aa).

Residues 17 to 25 and Ala43 contribute to the ATP site; that span reads AFSGGLDTS. Tyr99 is a binding site for L-citrulline. 2 residues coordinate ATP: Gly129 and Thr131. Thr131, Asn135, and Asp136 together coordinate L-aspartate. L-citrulline is bound at residue Asn135. Asp136 serves as a coordination point for ATP. Positions 139 and 192 each coordinate L-citrulline. Asp194 lines the ATP pocket. Thr201, Glu203, and Glu280 together coordinate L-citrulline.

The protein belongs to the argininosuccinate synthase family. Type 2 subfamily. As to quaternary structure, homotetramer.

Its subcellular location is the cytoplasm. The enzyme catalyses L-citrulline + L-aspartate + ATP = 2-(N(omega)-L-arginino)succinate + AMP + diphosphate + H(+). It participates in amino-acid biosynthesis; L-arginine biosynthesis; L-arginine from L-ornithine and carbamoyl phosphate: step 2/3. This Burkholderia thailandensis (strain ATCC 700388 / DSM 13276 / CCUG 48851 / CIP 106301 / E264) protein is Argininosuccinate synthase.